A 269-amino-acid polypeptide reads, in one-letter code: Tryptophan synthase alpha chain (269 aa).

Catalysis depends on proton acceptor residues Glu49 and Asp60.

The protein belongs to the TrpA family. As to quaternary structure, tetramer of two alpha and two beta chains.

The catalysed reaction is (1S,2R)-1-C-(indol-3-yl)glycerol 3-phosphate + L-serine = D-glyceraldehyde 3-phosphate + L-tryptophan + H2O. It participates in amino-acid biosynthesis; L-tryptophan biosynthesis; L-tryptophan from chorismate: step 5/5. Its function is as follows. The alpha subunit is responsible for the aldol cleavage of indoleglycerol phosphate to indole and glyceraldehyde 3-phosphate. This is Tryptophan synthase alpha chain from Enterobacter sp. (strain 638).